Here is a 496-residue protein sequence, read N- to C-terminus: Fibronectin type III and SPRY domain-containing protein 1 (496 aa).

The stretch at 4–99 forms a coiled coil; it reads QREALRKIIT…ALESSEELLE (96 aa). The COS domain occupies 105-162; sequence LQAMDREDFPQAAKQIKDGVTMAPAFRLSLKAKVSDNMSHLMVDFAQERQMLQALKFL. The region spanning 164-268 is the Fibronectin type-III domain; that stretch reads VPSAPVIDLA…EPVTLETPAF (105 aa). A B30.2/SPRY domain is found at 268 to 477; the sequence is FMFRLDASTS…VTTGLQVPSS (210 aa). The interval 301 to 336 is disordered; the sequence is KAREKDGKGRTASPINSPARGTPSPKRMPSGRGGRD. Omega-N-methylarginine occurs at positions 310 and 320.

In terms of assembly, oligomerization is required for binding to microtubules.

The protein resides in the cytoplasm. It is found in the cytoskeleton. The protein localises to the microtubule organizing center. Its subcellular location is the centrosome. It localises to the nucleus. The protein resides in the cleavage furrow. May be involved in microtubule organization and stabilization. The sequence is that of Fibronectin type III and SPRY domain-containing protein 1 (FSD1) from Macaca fascicularis (Crab-eating macaque).